Consider the following 94-residue polypeptide: Bacterial microcompartment shell protein PduA (94 aa).

One can recognise a BMC domain in the interval 5 to 89; sequence ALGMVETKGL…PHTDVEKILP (85 aa).

This sequence belongs to the bacterial microcompartments protein family. In terms of assembly, homohexamer with a central pore of about 5.6 Angstroms in diameter. The hexamers pack against each other in arrays. Interacts with the N-terminus of PduP which targets PduP to the BMC. Modeling suggests PduC, PduD, PduE, PduL and PduP interact with a cleft formed by the C-terminal segments of 2 adjacent PduA subunits (on the BMC luminal side) in the hexamer.

Its subcellular location is the bacterial microcompartment. Its pathway is polyol metabolism; 1,2-propanediol degradation. Its function is as follows. One of the major shell proteins of the bacterial microcompartment (BMC) dedicated to 1,2-propanediol (1,2-PD) degradation. At least one of PduA or PduJ is required for BMC assembly; it must be encoded as the first gene in the pdu operon. Not required for structural integrity of BMCs, it is required to mitigate propionaldehyde toxicity. Controls diffusion of 1,2-PD into and propionaldehyde out of the BMC shell; residue 40 is particularly important for pore permeability. Overexpression of this protein leads to aberrant filaments that extend the length of the cell, cross the cleavage furrow and impair division. The filaments form nanotubes with a hollow center. The isolated BMC shell component protein ratio for J:A:B':B:K:T:U is approximately 15:10:7:6:1:1:2. Edge residues (particularly Lys-26) are important for function and assembly of the BMC, and influence array formation by hexamers. Interaction with PduA allows encapsulation of at least PduP in BMCs. Probably also targets PduD to the BMC. PduA is probably the hub for binding multiple enzymes to the interior of the BMC; modeling suggests PduC, PduD, PduE, PduG, PduL and PduP are targeted to PduA. The 1,2-PD-specific bacterial microcompartment (BMC) concentrates low levels of 1,2-PD catabolic enzymes, concentrates volatile reaction intermediates thus enhancing pathway flux and keeps the level of toxic, mutagenic propionaldehyde low. The protein is Bacterial microcompartment shell protein PduA of Salmonella typhimurium (strain LT2 / SGSC1412 / ATCC 700720).